Reading from the N-terminus, the 483-residue chain is Siroheme synthase (483 aa).

A precorrin-2 dehydrogenase /sirohydrochlorin ferrochelatase region spans residues 1–203 (MNYFPIFANL…RQNTLAEREL (203 aa)). Residues 22–23 (AV) and 43–44 (KH) each bind NAD(+). Position 128 is a phosphoserine (S128). A uroporphyrinogen-III C-methyltransferase region spans residues 214 to 483 (GFVSLVGAGP…LGTGQEQQAA (270 aa)). Residue P223 participates in S-adenosyl-L-methionine binding. D246 (proton acceptor) is an active-site residue. The Proton donor role is filled by K268. S-adenosyl-L-methionine-binding positions include 299–301 (GGD), V304, 329–330 (TA), M381, and G410.

This sequence in the N-terminal section; belongs to the precorrin-2 dehydrogenase / sirohydrochlorin ferrochelatase family. The protein in the C-terminal section; belongs to the precorrin methyltransferase family.

It carries out the reaction uroporphyrinogen III + 2 S-adenosyl-L-methionine = precorrin-2 + 2 S-adenosyl-L-homocysteine + H(+). The catalysed reaction is precorrin-2 + NAD(+) = sirohydrochlorin + NADH + 2 H(+). It catalyses the reaction siroheme + 2 H(+) = sirohydrochlorin + Fe(2+). It functions in the pathway cofactor biosynthesis; adenosylcobalamin biosynthesis; precorrin-2 from uroporphyrinogen III: step 1/1. Its pathway is cofactor biosynthesis; adenosylcobalamin biosynthesis; sirohydrochlorin from precorrin-2: step 1/1. The protein operates within porphyrin-containing compound metabolism; siroheme biosynthesis; precorrin-2 from uroporphyrinogen III: step 1/1. It participates in porphyrin-containing compound metabolism; siroheme biosynthesis; siroheme from sirohydrochlorin: step 1/1. It functions in the pathway porphyrin-containing compound metabolism; siroheme biosynthesis; sirohydrochlorin from precorrin-2: step 1/1. Its function is as follows. Multifunctional enzyme that catalyzes the SAM-dependent methylations of uroporphyrinogen III at position C-2 and C-7 to form precorrin-2 via precorrin-1. Then it catalyzes the NAD-dependent ring dehydrogenation of precorrin-2 to yield sirohydrochlorin. Finally, it catalyzes the ferrochelation of sirohydrochlorin to yield siroheme. This is Siroheme synthase from Neisseria meningitidis serogroup C / serotype 2a (strain ATCC 700532 / DSM 15464 / FAM18).